The primary structure comprises 393 residues: Sialyltransferase-like protein 1 (393 aa).

The Cytoplasmic portion of the chain corresponds to 1 to 8; that stretch reads MKRPLRRP. A helical; Signal-anchor for type II membrane protein transmembrane segment spans residues 9-27; the sequence is FAVLLFVVLCAAASFPSVL. The Lumenal portion of the chain corresponds to 28–393; sequence RRSVGPAPVL…IAVPPVVFYH (366 aa). N-linked (GlcNAc...) asparagine glycans are attached at residues asparagine 49, asparagine 212, and asparagine 258.

Belongs to the glycosyltransferase 29 family. Expressed in leaves and stalks. Expressed at low levels in roots.

It is found in the golgi apparatus membrane. Its function is as follows. Possesses sialyltransferase-like activity in vitro. Transfers sialic acid to the oligosaccharide Gal-beta-1,3-GalNAc and to glycoproteins such as asialofetuin, alpha-1-acid glycoprotein (NeuAc-alpha-2,3-Gal-beta-1,3-GalNAc-) and andasialo-alpha-1-acid glycoprotein. The transferred sialic acid is linked to galactose of Gal-beta-1,3-GalNAc through alpha-2,6-linkage. The sequence is that of Sialyltransferase-like protein 1 from Oryza sativa subsp. japonica (Rice).